The primary structure comprises 122 residues: Large ribosomal subunit protein bL12 (122 aa).

It belongs to the bacterial ribosomal protein bL12 family. Homodimer. Part of the ribosomal stalk of the 50S ribosomal subunit. Forms a multimeric L10(L12)X complex, where L10 forms an elongated spine to which 2 to 4 L12 dimers bind in a sequential fashion. Binds GTP-bound translation factors.

In terms of biological role, forms part of the ribosomal stalk which helps the ribosome interact with GTP-bound translation factors. Is thus essential for accurate translation. This chain is Large ribosomal subunit protein bL12, found in Shewanella denitrificans (strain OS217 / ATCC BAA-1090 / DSM 15013).